An 88-amino-acid polypeptide reads, in one-letter code: Small ribosomal subunit protein bS16 (88 aa).

Belongs to the bacterial ribosomal protein bS16 family.

The polypeptide is Small ribosomal subunit protein bS16 (Halothermothrix orenii (strain H 168 / OCM 544 / DSM 9562)).